The following is a 212-amino-acid chain: Uridine kinase (212 aa).

Glycine 13–serine 20 lines the ATP pocket.

It belongs to the uridine kinase family.

The protein localises to the cytoplasm. The enzyme catalyses uridine + ATP = UMP + ADP + H(+). It carries out the reaction cytidine + ATP = CMP + ADP + H(+). It functions in the pathway pyrimidine metabolism; CTP biosynthesis via salvage pathway; CTP from cytidine: step 1/3. Its pathway is pyrimidine metabolism; UMP biosynthesis via salvage pathway; UMP from uridine: step 1/1. The protein is Uridine kinase of Shewanella baltica (strain OS223).